An 809-amino-acid polypeptide reads, in one-letter code: Sucrose synthase 4 (809 aa).

The tract at residues 275–753 (MIFNVVVVSP…GLQRIYEKYT (479 aa)) is GT-B glycosyltransferase.

It belongs to the glycosyltransferase 1 family. Plant sucrose synthase subfamily. Predominantly expressed in the leaf tissues and in caryopses.

It catalyses the reaction an NDP-alpha-D-glucose + D-fructose = a ribonucleoside 5'-diphosphate + sucrose + H(+). In terms of biological role, sucrose-cleaving enzyme that provides UDP-glucose and fructose for various metabolic pathways. This chain is Sucrose synthase 4 (SUS4), found in Oryza sativa subsp. japonica (Rice).